A 227-amino-acid polypeptide reads, in one-letter code: ATP synthase F(0) complex subunit a (227 aa).

Transmembrane regions (helical) follow at residues 9 to 29 (FASP…LPWV), 69 to 89 (WALL…LGLL), 98 to 118 (QLSL…IIGM), 132 to 152 (EGTP…SLFI), 165 to 185 (LTAG…LMPM), and 190 to 210 (AILT…VAMI).

Belongs to the ATPase A chain family. As to quaternary structure, component of the ATP synthase complex composed at least of ATP5F1A/subunit alpha, ATP5F1B/subunit beta, ATP5MC1/subunit c (homooctomer), MT-ATP6/subunit a, MT-ATP8/subunit 8, ATP5ME/subunit e, ATP5MF/subunit f, ATP5MG/subunit g, ATP5MK/subunit k, ATP5MJ/subunit j, ATP5F1C/subunit gamma, ATP5F1D/subunit delta, ATP5F1E/subunit epsilon, ATP5PF/subunit F6, ATP5PB/subunit b, ATP5PD/subunit d, ATP5PO/subunit OSCP. ATP synthase complex consists of a soluble F(1) head domain (subunits alpha(3) and beta(3)) - the catalytic core - and a membrane F(0) domain - the membrane proton channel (subunits c, a, 8, e, f, g, k and j). These two domains are linked by a central stalk (subunits gamma, delta, and epsilon) rotating inside the F1 region and a stationary peripheral stalk (subunits F6, b, d, and OSCP). Interacts with DNAJC30; interaction is direct.

Its subcellular location is the mitochondrion inner membrane. The enzyme catalyses H(+)(in) = H(+)(out). Its function is as follows. Subunit a, of the mitochondrial membrane ATP synthase complex (F(1)F(0) ATP synthase or Complex V) that produces ATP from ADP in the presence of a proton gradient across the membrane which is generated by electron transport complexes of the respiratory chain. ATP synthase complex consist of a soluble F(1) head domain - the catalytic core - and a membrane F(1) domain - the membrane proton channel. These two domains are linked by a central stalk rotating inside the F(1) region and a stationary peripheral stalk. During catalysis, ATP synthesis in the catalytic domain of F(1) is coupled via a rotary mechanism of the central stalk subunits to proton translocation. With the subunit c (ATP5MC1), forms the proton-conducting channel in the F(0) domain, that contains two crucial half-channels (inlet and outlet) that facilitate proton movement from the mitochondrial intermembrane space (IMS) into the matrix. Protons are taken up via the inlet half-channel and released through the outlet half-channel, following a Grotthuss mechanism. This chain is ATP synthase F(0) complex subunit a, found in Carassius auratus (Goldfish).